Reading from the N-terminus, the 104-residue chain is Large ribosomal subunit protein uL24 (104 aa).

Residues 85–96 (IKRELGAKEKAR) are compositionally biased toward basic and acidic residues. Positions 85-104 (IKRELGAKEKARADRRKTAK) are disordered.

The protein belongs to the universal ribosomal protein uL24 family. In terms of assembly, part of the 50S ribosomal subunit.

Its function is as follows. One of two assembly initiator proteins, it binds directly to the 5'-end of the 23S rRNA, where it nucleates assembly of the 50S subunit. In terms of biological role, one of the proteins that surrounds the polypeptide exit tunnel on the outside of the subunit. This is Large ribosomal subunit protein uL24 from Anaeromyxobacter sp. (strain Fw109-5).